The chain runs to 163 residues: Nucleotide-binding protein BSU11020 (163 aa).

It belongs to the YajQ family.

Its function is as follows. Nucleotide-binding protein. This Bacillus subtilis (strain 168) protein is Nucleotide-binding protein BSU11020 (yitK).